Here is a 257-residue protein sequence, read N- to C-terminus: Ditrans,polycis-undecaprenyl-diphosphate synthase ((2E,6E)-farnesyl-diphosphate specific) (257 aa).

Residue Asp-23 is part of the active site. Asp-23 contributes to the Mg(2+) binding site. Substrate contacts are provided by residues 24 to 27 (GNGR), Trp-28, Arg-36, His-40, and 68 to 70 (SSE). Asn-71 functions as the Proton acceptor in the catalytic mechanism. Substrate is bound by residues Trp-72, Arg-74, Arg-191, and 197–199 (RIS). Residue Glu-210 coordinates Mg(2+).

Belongs to the UPP synthase family. Homodimer. Mg(2+) serves as cofactor.

The enzyme catalyses 8 isopentenyl diphosphate + (2E,6E)-farnesyl diphosphate = di-trans,octa-cis-undecaprenyl diphosphate + 8 diphosphate. In terms of biological role, catalyzes the sequential condensation of isopentenyl diphosphate (IPP) with (2E,6E)-farnesyl diphosphate (E,E-FPP) to yield (2Z,6Z,10Z,14Z,18Z,22Z,26Z,30Z,34E,38E)-undecaprenyl diphosphate (di-trans,octa-cis-UPP). UPP is the precursor of glycosyl carrier lipid in the biosynthesis of bacterial cell wall polysaccharide components such as peptidoglycan and lipopolysaccharide. This is Ditrans,polycis-undecaprenyl-diphosphate synthase ((2E,6E)-farnesyl-diphosphate specific) from Xanthomonas axonopodis pv. citri (strain 306).